We begin with the raw amino-acid sequence, 328 residues long: DNA-directed RNA polymerase subunit alpha (328 aa).

Residues Met-1–Ser-231 are alpha N-terminal domain (alpha-NTD). Residues Met-252–Gly-328 are alpha C-terminal domain (alpha-CTD).

The protein belongs to the RNA polymerase alpha chain family. As to quaternary structure, homodimer. The RNAP catalytic core consists of 2 alpha, 1 beta, 1 beta' and 1 omega subunit. When a sigma factor is associated with the core the holoenzyme is formed, which can initiate transcription.

It carries out the reaction RNA(n) + a ribonucleoside 5'-triphosphate = RNA(n+1) + diphosphate. Its function is as follows. DNA-dependent RNA polymerase catalyzes the transcription of DNA into RNA using the four ribonucleoside triphosphates as substrates. This chain is DNA-directed RNA polymerase subunit alpha, found in Chlorobium limicola (strain DSM 245 / NBRC 103803 / 6330).